The following is a 345-amino-acid chain: Ananain (345 aa).

The signal sequence occupies residues 1-24 (MTSKVQLVFLFLFLCVMWASPSAA). Residues 25-122 (SCDEPSDPMM…VSFDDVDISS (98 aa)) constitute a propeptide, activation peptide. 3 disulfides stabilise this stretch: cysteine 144/cysteine 184, cysteine 178/cysteine 217, and cysteine 273/cysteine 325. The active site involves cysteine 147. Cysteine 147 contributes to the E64 binding site. Residues histidine 279 and asparagine 300 contribute to the active site.

As to expression, stem (at protein level).

The catalysed reaction is Hydrolysis of proteins with broad specificity for peptide bonds. Best reported small molecule substrate Bz-Phe-Val-Arg-|-NHMec, but broader specificity than fruit bromelain.. Its activity is regulated as follows. Strongly inhibited by chicken egg-white cystatin. Inhibited by iodoacetamide and the active-site-directed inhibitor E64 (L-trans-epoxysuccinyl-leucylamide-(4-guanido)-butane). Functionally, cysteine protease. Displays a high level of diversity in substrate specificity at the P1-P1' cleavage site. A hydrophilic P1 residue is preferred, with Gln or Arg strongly preferred. Favors an Ile/Leu residue at the P2 position of substrates, with an overall higher preference for Leu. The optimal tripeptide for cleavage is Pro-Leu-Gln, with cleavage occurring after the Gln residue. Another optimal tripeptide is Val-Leu-Arg, which may imply that a hydrophobic residue at the P3 position of substrates is preferred. In Ananas comosus (Pineapple), this protein is Ananain.